The primary structure comprises 1806 residues: Atrochrysone carboxylic acid synthase (1806 aa).

The interval 30-283 (DLQGLFRRLY…SLPVYSGLCH (254 aa)) is N-terminal acylcarrier protein transacylase domain (SAT). Residues 416-850 (QSKIAIIGMS…GGNTTVCLEE (435 aa)) enclose the Ketosynthase family 3 (KS3) domain. Catalysis depends on for beta-ketoacyl synthase activity residues Cys589, His725, and His768. Positions 951 to 1270 (FAFTGQGASY…SLTALHCAGV (320 aa)) are malonyl-CoA:ACP transacylase (MAT) domain. Residues 1340-1659 (TSTVQQIIEE…RILLNRFFTA (320 aa)) are product template (PT) domain. The N-terminal hotdog fold stretch occupies residues 1344-1479 (QQIIEESFNG…ASILYDDAAL (136 aa)). One can recognise a PKS/mFAS DH domain in the interval 1344-1654 (QQIIEESFNG…FRRYPRILLN (311 aa)). Catalysis depends on His1376, which acts as the Proton acceptor; for dehydratase activity. The interval 1506-1654 (IANRFTRNMA…FRRYPRILLN (149 aa)) is C-terminal hotdog fold. Residue Asp1565 is the Proton donor; for dehydratase activity of the active site. The interval 1668–1726 (HAAASSTPAPRTKPEPVPVATPATAAAPVAQSPAAPASVTPAPAPAPAPGPTPAAAPAA) is disordered. Residues 1685-1708 (PVATPATAAAPVAQSPAAPASVTP) show a composition bias toward low complexity. Residues 1709–1721 (APAPAPAPGPTPA) are compositionally biased toward pro residues. One can recognise a Carrier domain in the interval 1728–1805 (GESDSVAAKA…DLRSWLLEYY (78 aa)). At Ser1765 the chain carries O-(pantetheine 4'-phosphoryl)serine.

The enzyme catalyses holo-[ACP] + 8 malonyl-CoA + 8 H(+) = atrochrysone carboxyl-[ACP] + 8 CO2 + 8 CoA + 2 H2O. The protein operates within secondary metabolite biosynthesis. In terms of biological role, atrochrysone carboxylic acid synthase; part of the gene cluster that mediates the biosynthesis of monodictyphenone, a prenyl xanthone derivative. The pathway begins with the synthesis of atrochrysone thioester by the polyketide synthase (PKS) mdpG. The atrochrysone carboxyl ACP thioesterase mdpF then breaks the thioester bond and releases the atrochrysone carboxylic acid from mdpG. The atrochrysone carboxylic acid is then converted to atrochrysone which is further transformed into emodin anthrone. The next step is performed by the anthrone oxygenase mdpH that catalyzes the oxidation of emodinanthrone to emodin. Emodin is further modified to yield monodictyphenone via several steps involving mdpB, mdpC mdpJ, mdpK and mdpL. The short chain dehydrogenase mdpC converts the tautomers of emodin hydroquinone into the 3-hydroxy-3,4-dihydroan-thracen-1(2H)-one derivative. These enzymes with xptA, xptB and xptC are also proposed to be involved in the synthesis of shamixanthone from emodin. Especially, direct reduction of emodin by the short chain dehydrogenase mdpC followed by dehydration catalyzed by the scytalone dehydratase-like protein mdpB gives loss of oxygen and formation of chrysophanol intermediate in two simple steps. This is Atrochrysone carboxylic acid synthase from Emericella nidulans (strain FGSC A4 / ATCC 38163 / CBS 112.46 / NRRL 194 / M139) (Aspergillus nidulans).